The following is a 383-amino-acid chain: Succinyl-diaminopimelate desuccinylase (383 aa).

H73 contacts Zn(2+). Residue D75 is part of the active site. Zn(2+) is bound at residue D107. E141 functions as the Proton acceptor in the catalytic mechanism. E142, E170, and H356 together coordinate Zn(2+).

It belongs to the peptidase M20A family. DapE subfamily. In terms of assembly, homodimer. The cofactor is Zn(2+). Co(2+) serves as cofactor.

It catalyses the reaction N-succinyl-(2S,6S)-2,6-diaminopimelate + H2O = (2S,6S)-2,6-diaminopimelate + succinate. It functions in the pathway amino-acid biosynthesis; L-lysine biosynthesis via DAP pathway; LL-2,6-diaminopimelate from (S)-tetrahydrodipicolinate (succinylase route): step 3/3. In terms of biological role, catalyzes the hydrolysis of N-succinyl-L,L-diaminopimelic acid (SDAP), forming succinate and LL-2,6-diaminopimelate (DAP), an intermediate involved in the bacterial biosynthesis of lysine and meso-diaminopimelic acid, an essential component of bacterial cell walls. The sequence is that of Succinyl-diaminopimelate desuccinylase from Pseudomonas putida (strain GB-1).